A 140-amino-acid polypeptide reads, in one-letter code: Large ribosomal subunit protein uL11 (140 aa).

It belongs to the universal ribosomal protein uL11 family. Part of the ribosomal stalk of the 50S ribosomal subunit. Interacts with L10 and the large rRNA to form the base of the stalk. L10 forms an elongated spine to which L12 dimers bind in a sequential fashion forming a multimeric L10(L12)X complex. In terms of processing, one or more lysine residues are methylated.

Forms part of the ribosomal stalk which helps the ribosome interact with GTP-bound translation factors. This chain is Large ribosomal subunit protein uL11, found in Gemmatimonas aurantiaca (strain DSM 14586 / JCM 11422 / NBRC 100505 / T-27).